The sequence spans 218 residues: Elongation factor Ts (218 aa).

Residues 82 to 85 form an involved in Mg(2+) ion dislocation from EF-Tu region; the sequence is TDFV.

It belongs to the EF-Ts family.

It is found in the cytoplasm. Functionally, associates with the EF-Tu.GDP complex and induces the exchange of GDP to GTP. It remains bound to the aminoacyl-tRNA.EF-Tu.GTP complex up to the GTP hydrolysis stage on the ribosome. The protein is Elongation factor Ts of Prochlorococcus marinus (strain NATL1A).